A 371-amino-acid chain; its full sequence is Bifunctional enzyme IspD/IspF (371 aa).

Positions Met-1 to Ile-210 are 2-C-methyl-D-erythritol 4-phosphate cytidylyltransferase. The 2-C-methyl-D-erythritol 2,4-cyclodiphosphate synthase stretch occupies residues Phe-211–Leu-371. A divalent metal cation contacts are provided by Asp-217 and His-219. Residues Asp-217–His-219 and His-243–Ser-244 contribute to the 4-CDP-2-C-methyl-D-erythritol 2-phosphate site. His-251 contacts a divalent metal cation. 4-CDP-2-C-methyl-D-erythritol 2-phosphate contacts are provided by residues Asp-265–Gly-267, Phe-270–Asp-274, Thr-341–Glu-344, Phe-348, and Arg-351.

In the N-terminal section; belongs to the IspD/TarI cytidylyltransferase family. IspD subfamily. The protein in the C-terminal section; belongs to the IspF family. A divalent metal cation serves as cofactor.

The enzyme catalyses 2-C-methyl-D-erythritol 4-phosphate + CTP + H(+) = 4-CDP-2-C-methyl-D-erythritol + diphosphate. It catalyses the reaction 4-CDP-2-C-methyl-D-erythritol 2-phosphate = 2-C-methyl-D-erythritol 2,4-cyclic diphosphate + CMP. It functions in the pathway isoprenoid biosynthesis; isopentenyl diphosphate biosynthesis via DXP pathway; isopentenyl diphosphate from 1-deoxy-D-xylulose 5-phosphate: step 2/6. The protein operates within isoprenoid biosynthesis; isopentenyl diphosphate biosynthesis via DXP pathway; isopentenyl diphosphate from 1-deoxy-D-xylulose 5-phosphate: step 4/6. Bifunctional enzyme that catalyzes the formation of 4-diphosphocytidyl-2-C-methyl-D-erythritol from CTP and 2-C-methyl-D-erythritol 4-phosphate (MEP) (IspD), and catalyzes the conversion of 4-diphosphocytidyl-2-C-methyl-D-erythritol 2-phosphate (CDP-ME2P) to 2-C-methyl-D-erythritol 2,4-cyclodiphosphate (ME-CPP) with a corresponding release of cytidine 5-monophosphate (CMP) (IspF). The sequence is that of Bifunctional enzyme IspD/IspF from Campylobacter lari (strain RM2100 / D67 / ATCC BAA-1060).